The sequence spans 353 residues: Zinc transporter 5 (353 aa).

A signal peptide spans 1–27; that stretch reads MATAAMTKVFVLLFLVAACYLPAHAAA. The Extracellular portion of the chain corresponds to 28 to 48; that stretch reads AECDCATDTAGRDKAQALRLK. The chain crosses the membrane as a helical span at residues 49 to 69; the sequence is VIAIFCILAGSTVGAALPSLG. Residues 70-86 lie on the Cytoplasmic side of the membrane; that stretch reads GRFPAIQPETDVFLSVK. The helical transmembrane segment at 87–107 threads the bilayer; the sequence is AFAGGVILATGLVHILPAAFE. Residues 108-121 lie on the Extracellular side of the membrane; the sequence is ALSSPCLVGGPWKR. The helical transmembrane segment at 122–142 threads the bilayer; the sequence is FPFAGMVAMVSAIGTLIVDTV. Topologically, residues 143–198 are cytoplasmic; it reads ATGYFHRTDAKRKAAAVADEPADDLEASDEHSHGHAHGMSVMSVAPAGEEDLVRHR. A helical membrane pass occupies residues 199-219; it reads VISQVLELGVVVHSLIIGMSL. Residues 220-230 lie on the Extracellular side of the membrane; it reads GASDFPSTVRP. A helical membrane pass occupies residues 231-251; sequence LVPALTFHQFFEGIGLGGCIV. Topologically, residues 252–260 are cytoplasmic; sequence QAKFRVRSV. Residues 261–281 traverse the membrane as a helical segment; that stretch reads VTMALFFSLTTPAGIVVGIGI. Residues 282-292 lie on the Extracellular side of the membrane; the sequence is SSVYDANSPTA. A helical membrane pass occupies residues 293–313; sequence LVVQGLLEAAAAGILVYMALV. The Cytoplasmic portion of the chain corresponds to 314–332; it reads DILAEDFMKTKVQRRGRLQ. The chain crosses the membrane as a helical span at residues 333-353; that stretch reads LAMNVALLLGAGLMSMIAIWA.

This sequence belongs to the ZIP transporter (TC 2.A.5) family.

The protein localises to the cell membrane. Its function is as follows. Zinc transporter that mediates zinc uptake from the rhizosphere and may be responsible for the translocation of zinc within the plant. The chain is Zinc transporter 5 (ZIP5) from Oryza sativa subsp. japonica (Rice).